We begin with the raw amino-acid sequence, 215 residues long: Nascent polypeptide-associated complex subunit alpha (215 aa).

The segment at 1–81 (MPGEATDTVP…SEKKARKAMS (81 aa)) is disordered. Residues 9 to 28 (VPATEQELPQPQAETGSGTE) are compositionally biased toward polar residues. The segment covering 29–42 (SDSDESVPELEEQD) has biased composition (acidic residues). The residue at position 43 (Ser43) is a Phosphoserine; by ILK1. Positions 44–57 (TQATTQQAQLAAAA) are enriched in low complexity. Residues 69–80 (QSRSEKKARKAM) form a required for DNA-binding region. In terms of domain architecture, NAC-A/B spans 70 to 135 (SRSEKKARKA…AKIEDLSQQA (66 aa)). The RNA/DNA-binding stretch occupies residues 93–108 (RVTIRKSKNILFVITK). Residue Ser132 is modified to Phosphoserine. The residue at position 142 (Lys142) is an N6-acetyllysine; alternate. Lys142 is covalently cross-linked (Glycyl lysine isopeptide (Lys-Gly) (interchain with G-Cter in SUMO2); alternate). Thr159 is modified (phosphothreonine; by GSK3-beta). Thr161 is modified (phosphothreonine). 4 positions are modified to phosphoserine: Ser166, Ser186, Ser191, and Ser203. Residues 176-213 (VEVKDIELVMSQANVSRAKAVRALKNNSNDIVNAIMEL) enclose the UBA domain.

The protein belongs to the NAC-alpha family. As to quaternary structure, part of the nascent polypeptide-associated complex (NAC), which is a heterodimer of NACA and BTF3 (via NAC-A/B domains). NAC associates with ribosomes through the BTF3/NACB subunit and contacts the ribosomal protein L23, which is positioned near the exiting site. Both subunits can contact nascent polypeptide chains. NACA may also form homodimers, and only this form binds DNA. Interacts with TBP and JUN. Phosphorylation of Ser-43 by ILK during cell adhesion may promote nuclear localization. Phosphorylation of Thr-159 by GSK3B may promote proteasome mediated degradation.

The protein localises to the cytoplasm. Its subcellular location is the nucleus. Its function is as follows. Prevents inappropriate targeting of non-secretory polypeptides to the endoplasmic reticulum (ER). Binds to nascent polypeptide chains as they emerge from the ribosome and blocks their interaction with the signal recognition particle (SRP), which normally targets nascent secretory peptides to the ER. Also reduces the inherent affinity of ribosomes for protein translocation sites in the ER membrane (M sites). May act as a specific coactivator for JUN, binding to DNA and stabilizing the interaction of JUN homodimers with target gene promoters. In Bos taurus (Bovine), this protein is Nascent polypeptide-associated complex subunit alpha (NACA).